The following is a 677-amino-acid chain: MSTRDLSVLISVVLIVAMLVIPFPPWLLSILIIINISLALIVLLTTMNMQEALQFSIFPSLLLLLTLFRLGLNVSTTRSILSHGEGGKVVETFGNFVVGGNVLVGLVVFIILIIIQFIVITKGAERVSEVAARFTLDAMPGKQMSIDADLNAGMITEQEAKHRREKVAREADFYGAMDGASKFVKGDAIAGIIIVMINIIFGIVIGMLQQGMSIQEAASHFTMLTVGDGIVSQIPALLISTATGIVVTRAASEGNLGHDITGQLFAYPKLLYVAAATIMLLGIFTPIGILLTGPLAGLLAFGAYTLSKSGKEKEEVDEILEEEAEVDELKSPESVVQLLHIDPIEFEFGYGLIPLADANQGGDLLDRIVMIRRQLALELGLVIPVVRIRDNIALQPNEYRLKIKGNEVAKGELLLDHYLAMSPTPEDDLIEGIETVEPSFGLPAKWISEAVKDEADMLGYTVVDPASVVSTHITEKIKQHAHELIGRQETKQLIDHLKESYPVLVEEVTPNPLSVGDIQKVLAKLLKEKVSIRNLVTIFETLADYGKLTTDSDLLTEYTRQALAKQITAQFAKENEVLKVVTCSGRVEKAIADGVQQTEHGNYLSLEPDISESIVRSVAKEAEQLSLRQETAILLCSPPVRMYVKQLLERYFPDLPVLSYNELEANVEVQSIGVVDI.

7 consecutive transmembrane segments (helical) span residues 6–22 (LSVL…LVIP), 27–43 (LLSI…LIVL), 52–68 (ALQF…LTLF), 104–120 (VGLV…FIVI), 189–205 (IAGI…GIVI), 230–246 (IVSQ…TGIV), and 275–291 (AATI…GILL).

It belongs to the FHIPEP (flagella/HR/invasion proteins export pore) family.

It localises to the cell membrane. Its function is as follows. Involved in the export of flagellum proteins. The chain is Flagellar biosynthesis protein FlhA (flhA) from Bacillus subtilis (strain 168).